The chain runs to 280 residues: Probable 2-(5''-triphosphoribosyl)-3'-dephosphocoenzyme-A synthase (280 aa).

Belongs to the CitG/MdcB family.

The catalysed reaction is 3'-dephospho-CoA + ATP = 2'-(5''-triphospho-alpha-D-ribosyl)-3'-dephospho-CoA + adenine. The chain is Probable 2-(5''-triphosphoribosyl)-3'-dephosphocoenzyme-A synthase from Lactiplantibacillus plantarum (strain ATCC BAA-793 / NCIMB 8826 / WCFS1) (Lactobacillus plantarum).